The following is a 254-amino-acid chain: Very-long-chain (3R)-3-hydroxyacyl-CoA dehydratase 2 (254 aa).

A compositionally biased stretch (low complexity) spans 1–10 (MAAAAATAAT). Positions 1 to 34 (MAAAAATAATKGNGGGSGRVGAGDSSGARKKKGP) are disordered. At alanine 2 the chain carries N-acetylalanine. Over 2–41 (AAAAATAATKGNGGGSGRVGAGDSSGARKKKGPGPVATAY) the chain is Cytoplasmic. The segment covering 12 to 21 (GNGGGSGRVG) has biased composition (gly residues). A helical membrane pass occupies residues 42–60 (LVIYNVVMTAGWLVIAVGL). Topologically, residues 61 to 79 (VRAYLAKGSYHSLYYSIER) are lumenal. A helical membrane pass occupies residues 80–97 (PLKFFQTGALLEILHCAI). The Cytoplasmic portion of the chain corresponds to 98–107 (GIVPSSVVLT). Residues 108–125 (SFQVMSRVFLIWAVTHSV) traverse the membrane as a helical segment. At 126 to 130 (KEVQS) the chain is on the lumenal side. Residues 131–146 (EDSVLLFVIAWTITEI) form a helical membrane-spanning segment. Topologically, residues 147–169 (IRYSFYTFSLLNHLPYIIKWARY) are cytoplasmic. A helical membrane pass occupies residues 170-187 (TLFIVLYPMGVTGELLTI). Active-site residues include tyrosine 176 and glutamate 183. Residues 188-217 (YAALPFVRQAGLYSISLPNKYNFSFDYHAF) are Lumenal-facing. Residues 198 to 214 (GLYSISLPNKYNFSFDY) are may be involved in interaction with TECR. N-linked (GlcNAc...) asparagine glycosylation is present at asparagine 209. The chain crosses the membrane as a helical span at residues 218-235 (LILIMISYIPLFPQLYFH). Residues 236–254 (MIHQRRKVLSHTEEHKKFE) lie on the Cytoplasmic side of the membrane.

The protein belongs to the very long-chain fatty acids dehydratase HACD family. May interact with enzymes of the ELO family (including ELOVL1); with those enzymes that mediate condensation, the first of the four steps of the reaction cycle responsible for fatty acids elongation, may be part of a larger fatty acids elongase complex. Interacts with BCAP31. Interacts with TECR.

The protein localises to the endoplasmic reticulum membrane. The catalysed reaction is a very-long-chain (3R)-3-hydroxyacyl-CoA = a very-long-chain (2E)-enoyl-CoA + H2O. The enzyme catalyses (3R)-hydroxyhexadecanoyl-CoA = (2E)-hexadecenoyl-CoA + H2O. It carries out the reaction (3R)-hydroxyoctadecanoyl-CoA = (2E)-octadecenoyl-CoA + H2O. It catalyses the reaction (3R)-hydroxyeicosanoyl-CoA = (2E)-eicosenoyl-CoA + H2O. The catalysed reaction is (3R)-hydroxydocosanoyl-CoA = (2E)-docosenoyl-CoA + H2O. The enzyme catalyses (3R)-hydroxytetracosanoyl-CoA = (2E)-tetracosenoyl-CoA + H2O. It carries out the reaction (3R)-hydroxyhexacosanoyl-CoA = (2E)-hexacosenoyl-CoA + H2O. It functions in the pathway lipid metabolism; fatty acid biosynthesis. Its function is as follows. Catalyzes the third of the very long-chain fatty acids (VLCFA) elongation four-step cycle (condensation, reduction, dehydration, and reduction). This endoplasmic reticulum-elongation process is characterized by the addition of two carbons to the lipid chain through each cycle. This enzyme catalyzes the dehydration of the 3-hydroxyacyl-CoA intermediate into trans-2,3-enoyl-CoA, within each cycle of elongation. Therefore, it participates in the production of various VLCFAs involved in multiple biological processes as precursors of membrane lipids and lipid mediators. This chain is Very-long-chain (3R)-3-hydroxyacyl-CoA dehydratase 2, found in Mus musculus (Mouse).